Here is a 95-residue protein sequence, read N- to C-terminus: Large ribosomal subunit protein uL23 (95 aa).

It belongs to the universal ribosomal protein uL23 family. As to quaternary structure, part of the 50S ribosomal subunit. Contacts protein L29, and trigger factor when it is bound to the ribosome.

Its function is as follows. One of the early assembly proteins it binds 23S rRNA. One of the proteins that surrounds the polypeptide exit tunnel on the outside of the ribosome. Forms the main docking site for trigger factor binding to the ribosome. The polypeptide is Large ribosomal subunit protein uL23 (Leuconostoc mesenteroides subsp. mesenteroides (strain ATCC 8293 / DSM 20343 / BCRC 11652 / CCM 1803 / JCM 6124 / NCDO 523 / NBRC 100496 / NCIMB 8023 / NCTC 12954 / NRRL B-1118 / 37Y)).